The chain runs to 1957 residues: MSNQSSSGSNTSDLDEESASSLVSSAASPFIDSDLETPRPNISRASTGQLAEDGDTSSQHEDSSEELKRQEVRGMRRHSDLSIDAKLGSSEGSTASSALPLTPRSPSNASWLLVRGGLLDSPILDINSVTQKSNLLNELKQVRSKLAALEHENGILSLQLSSSNKKDKNTSSVTTLTSEEDVSYFQKKLTNMESNFSAKQSEAYDLSRQLLTVTEKLDKKEKDYEKIKEDVSSIKASLAEEQASNKSLRGEQERLEKLLVSSNKTVSTLRQTENSLRAECKTLQEKLEKCAINEEDSKLLEELKHNVANYSDAIVHKDKLIEDLSTRISEFDNLKSERDTLSIKNEKLEKLLRNTIGSLKDSRTSNSQLEEEMVELKESNRTIHSQLTDAESKLSSFEQENKSLKGSIDEYQNNLSSKDKMVKQVSSQLEEARSSLAHATGKLAEINSERDFQNKKIKDFEKIEQDLRACLNSSSNELKEKSALIDKKDQELNNLREQIKEQKKVSESTQSSLQSLQRDILNEKKKHEVYESQLNELKGELQTEISNSEHLSSQLSTLAAEKEAAVATNNELSESKNSLQTLCNAFQEKLAKSVMQLKENEQNFSSLDTSFKKLNESHQELENNHQTITKQLKDTSSKLQQLQLERANFEQKESTLSDENNDLRTKLLKLEESNKSLIKKQEDVDSLEKNIQTLKEDLRKSEEALRFSKLEAKNLREVIDNLKGKHETLEAQRNDLHSSLSDAKNTNAILSSELTKSSEDVKRLTANVETLTQDSKAMKQSFTSLVNSYQSISNLYHELRDDHVNMQSQNNTLLESESKLKTDCENLTQQNMTLIDNVQKLMHKHVNQESKVSELKEVNGKLSLDLKNLRSSLNVAISDNDQILTQLAELSKNYDSLEQESAQLNSGLKSLEAEKQLLHTENEELHIRLDKLTGKLKIEESKSSDLGKKLTARQEEISNLKEENMSQSQAITSVKSKLDETLSKSSKLEADIEHLKNKVSEVEVERNALLASNERLMDDLKNNGENIASLQTEIEKKRAENDDLQSKLSVVSSEYENLLLISSQTNKSLEDKTNQLKYIEKNVQKLLDEKDQRNVELEELTSKYGKLGEENAQIKDELLALRKKSKKQHDLCANFVDDLKEKSDALEQLTNEKNELIVSLEQSNSNNEALVEERSDLANRLSDMKKSLSDSDNVISVIRSDLVRVNDELDTLKKDKDSLSTQYSEVCQDRDDLLDSLKGCEESFNKYAVSLRELCTKSEIDVPVSEILDDNFVFNAGNFSELSRLTVLSLENYLDAFNQVNFKKMELDNRLTTTDAEFTKVVADLEKLQHEHDDWLIQRGDLEKALKDSEKNFLRKEAEMTENIHSLEEGKEETKKEIAELSSRLEDNQLATNKLKNQLDHLNQEIRLKEDVLKEKESLIISLEESLSNQRQKESSLLDAKNELEHMLDDTSRKNSSLMEKIESINSSLDDKSFELASAVEKLGALQKLHSESLSLMENIKSQLQEAKEKIQVDESTIQELDHEITASKNNYEGKLNDKDSIIRDLSENIEQLNNLLAEEKSAVKRLSTEKESEILQFNSRLADLEYHKSQVESELGRSKLKLASTTEELQLAENERLSLTTRMLDLQNQVKDLSNIKDSLSEDLRTLRSLEDSVASLQKECKIKSNTVESLQDVLTSVQARNAELEDEVSRSVDKIRRRDDRCEHLSGKLKKLHSQLEEQHETFFRAEQQRMTQLGFLKETVKKQEKLLKKLNLRQEQLIPRSSILVYESYIRDIEKEIIVLQERLNGIELSQQLPKGYFGYFFKTNRVEMEVLDSFKQQVAKLQFLAGAEFIVKFKEDLEKCAAEEKEKQATFDNYSEKVENLGKSIEALYFALNREISFRKSLALSKSAYHNLLVRDSPKFNPDSQITYSIPVTNTKQSLLRSAILCVISLQRLRLLGQRHSFCEEVIENLSCV.

Low complexity-rich tracts occupy residues 1–12 and 19–28; these read MSNQSSSGSNTS and ASSLVSSAAS. A disordered region spans residues 1–102; the sequence is MSNQSSSGSN…STASSALPLT (102 aa). The segment covering 58–83 has biased composition (basic and acidic residues); that stretch reads SQHEDSSEELKRQEVRGMRRHSDLSI. A compositionally biased stretch (polar residues) spans 90–102; that stretch reads SEGSTASSALPLT. Ser-105 carries the post-translational modification Phosphoserine. 4 coiled-coil regions span residues 199–785, 804–1235, 1320–1471, and 1481–1723; these read KQSE…FTSL, VNMQ…DLLD, KVVA…SLDD, and EKLG…EQHE.

It belongs to the MPC70 family. As to quaternary structure, monomer.

It localises to the cytoplasm. Its subcellular location is the cytoskeleton. The protein resides in the microtubule organizing center. It is found in the spindle pole body. In terms of biological role, has a role in the initiation of spore membrane formation. This chain is Sporulation-specific protein 15 (spo15), found in Schizosaccharomyces pombe (strain 972 / ATCC 24843) (Fission yeast).